We begin with the raw amino-acid sequence, 280 residues long: Bifunctional protein FolD (280 aa).

Residues 166-168 and serine 191 each bind NADP(+); that span reads GRS.

This sequence belongs to the tetrahydrofolate dehydrogenase/cyclohydrolase family. Homodimer.

The enzyme catalyses (6R)-5,10-methylene-5,6,7,8-tetrahydrofolate + NADP(+) = (6R)-5,10-methenyltetrahydrofolate + NADPH. It carries out the reaction (6R)-5,10-methenyltetrahydrofolate + H2O = (6R)-10-formyltetrahydrofolate + H(+). Its pathway is one-carbon metabolism; tetrahydrofolate interconversion. Its function is as follows. Catalyzes the oxidation of 5,10-methylenetetrahydrofolate to 5,10-methenyltetrahydrofolate and then the hydrolysis of 5,10-methenyltetrahydrofolate to 10-formyltetrahydrofolate. This chain is Bifunctional protein FolD, found in Cellvibrio japonicus (strain Ueda107) (Pseudomonas fluorescens subsp. cellulosa).